The chain runs to 739 residues: Eukaryotic translation initiation factor 3 subunit B (739 aa).

The region spanning 39–125 (AFVVIDGLPV…HTLAVNKLTD (87 aa)) is the RRM domain. 5 WD repeats span residues 191–229 (RDHW…KQKQ), 231–288 (PHPF…RSFV), 457–498 (SLKD…SFFA), 516–559 (IEKK…EKPE), and 574–612 (NEHF…HTFS).

It belongs to the eIF-3 subunit B family. In terms of assembly, component of the eukaryotic translation initiation factor 3 (eIF-3) complex.

Its subcellular location is the cytoplasm. RNA-binding component of the eukaryotic translation initiation factor 3 (eIF-3) complex, which is involved in protein synthesis of a specialized repertoire of mRNAs and, together with other initiation factors, stimulates binding of mRNA and methionyl-tRNAi to the 40S ribosome. The eIF-3 complex specifically targets and initiates translation of a subset of mRNAs involved in cell proliferation. The polypeptide is Eukaryotic translation initiation factor 3 subunit B (Coccidioides immitis (strain RS) (Valley fever fungus)).